The primary structure comprises 130 residues: MKRRTARERAMQALYQMDITGELEPKIAVENTLDEGEETNEFLESLVVGFVENKEVIDEAIRQNLKKWKLERISIVDRSILRVAVYEMKYMEEIPHNVTINEAIEIAKTFGDEESRRFINGVLSNIKDTL.

The protein belongs to the NusB family.

Its function is as follows. Involved in transcription antitermination. Required for transcription of ribosomal RNA (rRNA) genes. Binds specifically to the boxA antiterminator sequence of the ribosomal RNA (rrn) operons. This is Transcription antitermination protein NusB from Bacillus cereus (strain ATCC 10987 / NRS 248).